The primary structure comprises 466 residues: Probable WRKY transcription factor 32 (466 aa).

Disordered stretches follow at residues 1 to 45 (MEED…MEDL) and 140 to 166 (SVPTKQEQRSDSPVVNRLSVTPVPRTP). Positions 8 to 38 (DEAKTYTVEKSEKVEPEKDGLSQFRDEEKSL) are enriched in basic and acidic residues. Positions 162–226 (VPRTPARDGY…NKGLHTHEPP (65 aa)) form a DNA-binding region, WRKY 1. The Zn(2+) site is built by C193, C198, H221, and H223. The segment at 284 to 317 (HCENEAVEEPEPKRRLKKDNSQSSDSVSKPGKKN) is disordered. The segment at residues 325–390 (GDVGICGDGY…YKGVHNHDMP (66 aa)) is a DNA-binding region (WRKY 2). Residues C356, C361, H385, and H387 each coordinate Zn(2+). Residues 410–439 (TSMRTRTDDQVNIPTSSQCSVGRESEKQSK) form a disordered region. A compositionally biased stretch (polar residues) spans 419–429 (QVNIPTSSQCS).

This sequence belongs to the WRKY group I family.

The protein resides in the nucleus. Its function is as follows. Transcription factor. Interacts specifically with the W box (5'-(T)TGAC[CT]-3'), a frequently occurring elicitor-responsive cis-acting element. The chain is Probable WRKY transcription factor 32 (WRKY32) from Arabidopsis thaliana (Mouse-ear cress).